Consider the following 142-residue polypeptide: Large ribosomal subunit protein uL11 (142 aa).

Belongs to the universal ribosomal protein uL11 family. In terms of assembly, part of the ribosomal stalk of the 50S ribosomal subunit. Interacts with L10 and the large rRNA to form the base of the stalk. L10 forms an elongated spine to which L12 dimers bind in a sequential fashion forming a multimeric L10(L12)X complex. In terms of processing, one or more lysine residues are methylated.

Functionally, forms part of the ribosomal stalk which helps the ribosome interact with GTP-bound translation factors. The polypeptide is Large ribosomal subunit protein uL11 (Erwinia tasmaniensis (strain DSM 17950 / CFBP 7177 / CIP 109463 / NCPPB 4357 / Et1/99)).